The chain runs to 349 residues: MKISRETLHQLIENKLCQAGLKREHAATVAEVLVYADARGIHSHGAVRVEYYAERISKGGTNREPEFRLEETGPCSAILHADNAAGQVAAKMGMEHAIKTAQQNGVAVVGISRMGHSGAISYFVQQAARAGLIGISMCQSDPMVVPFGGAEIYYGTNPLAFAAPGEGDEILTFDMATTVQAWGKVLDARSRNMSIPDTWAVDKNGAPTTDPFAVHALLPAAGPKGYGLMMMIDVLSGVLLGLPFGRQVSSMYDDLHAGRNLGQLHVVINPNFFSSSELFRQHLSQTMRELNAITPAPGFNQVYYPGQDQDIKQRQAAVEGIEIVDDIYQYLISDALYNTSYETKNPFAQ.

His-116 (proton acceptor) is an active-site residue. NAD(+) is bound by residues Ser-140, 174–176, Lys-224, and 306–308; these read DMA and GQD.

It belongs to the LDH2/MDH2 oxidoreductase family. In terms of assembly, homodimer.

Its subcellular location is the cytoplasm. The enzyme catalyses (S)-ureidoglycolate + NAD(+) = N-carbamoyl-2-oxoglycine + NADH + H(+). Its pathway is nitrogen metabolism; (S)-allantoin degradation; oxalurate from (S)-ureidoglycolate: step 1/1. Its function is as follows. AllD plays a pivotal role as a metabolic branch-point enzyme in nitrogen utilization via the assimilation of allantoin. It is able to utilize allantoin as a sole source of nitrogen under anaerobic conditions. Catalyzes the oxidation of ureidoglycolate to oxalurate. The sequence is that of Ureidoglycolate dehydrogenase (NAD(+)) from Escherichia coli O157:H7.